Reading from the N-terminus, the 157-residue chain is Protein Smg (157 aa).

Belongs to the Smg family.

The chain is Protein Smg from Escherichia coli O6:H1 (strain CFT073 / ATCC 700928 / UPEC).